The sequence spans 136 residues: Nucleoside diphosphate kinase (136 aa).

Residues K10, F58, R86, T92, R104, and N114 each coordinate ATP. H117 serves as the catalytic Pros-phosphohistidine intermediate.

Belongs to the NDK family. In terms of assembly, homohexamer. Requires Mg(2+) as cofactor.

The protein resides in the cytoplasm. It carries out the reaction a 2'-deoxyribonucleoside 5'-diphosphate + ATP = a 2'-deoxyribonucleoside 5'-triphosphate + ADP. It catalyses the reaction a ribonucleoside 5'-diphosphate + ATP = a ribonucleoside 5'-triphosphate + ADP. Its function is as follows. Major role in the synthesis of nucleoside triphosphates other than ATP. The ATP gamma phosphate is transferred to the NDP beta phosphate via a ping-pong mechanism, using a phosphorylated active-site intermediate. In Mycobacterium bovis (strain ATCC BAA-935 / AF2122/97), this protein is Nucleoside diphosphate kinase.